The following is a 208-amino-acid chain: Small ribosomal subunit protein uS4 (208 aa).

Residues 98–158 enclose the S4 RNA-binding domain; sequence RRLDNVVYRL…EKNRKISVVA (61 aa).

It belongs to the universal ribosomal protein uS4 family. In terms of assembly, part of the 30S ribosomal subunit. Contacts protein S5. The interaction surface between S4 and S5 is involved in control of translational fidelity.

One of the primary rRNA binding proteins, it binds directly to 16S rRNA where it nucleates assembly of the body of the 30S subunit. In terms of biological role, with S5 and S12 plays an important role in translational accuracy. The chain is Small ribosomal subunit protein uS4 from Lawsonia intracellularis (strain PHE/MN1-00).